We begin with the raw amino-acid sequence, 471 residues long: Ubiquitin carboxyl-terminal hydrolase 8 (471 aa).

Cys-4, His-6, Cys-46, Cys-49, Cys-60, Cys-63, Cys-68, His-73, His-77, His-83, Cys-96, and Cys-99 together coordinate Zn(2+). A UBP-type; degenerate zinc finger spans residues 22-122 (KTCNAARYIL…ILAKYWDDVC (101 aa)). The USP domain occupies 137–468 (SGLINMGSTC…QAYLLFYTIR (332 aa)). Residue Cys-146 is the Nucleophile of the active site. The Zn(2+) site is built by His-170, Cys-174, Cys-182, Cys-185, His-250, Cys-271, Cys-273, His-276, Cys-289, Cys-292, Cys-336, and Cys-339. The Proton acceptor role is filled by His-427.

Belongs to the peptidase C19 family. UBP8 subfamily. As to quaternary structure, component of the 1.8 MDa SAGA (Spt-Ada-Gcn5 acetyltransferase) complex, which is composed of 19 subunits TRA1, SPT7, TAF5, NGG1/ADA3, SGF73, SPT20/ADA5, SPT8, TAF12, TAF6, HFI1/ADA1, UBP8, GCN5, ADA2, SPT3, SGF29, TAF10, TAF9, SGF11 and SUS1. The SAGA complex is composed of 4 modules, namely the HAT (histone acetyltransferase) module (GCN5, ADA2, NGG1/ADA3 and SGF29), the DUB (deubiquitinating) module (UBP8, SGF11, SGF73 and SUS1), the core or TAF (TBP-associated factor) module (TAF5, TAF6, TAF9, TAF10 and TAF12), and the Tra1 or SPT (Suppressor of Ty) module (TRA1, HFI1/ADA1, SPT3, SPT7, SPT8 and SPT20/ADA5). The Tra1/SPT module binds activators, the core module recruits TBP (TATA-binding protein), the HAT module contains the histone H3 acetyltransferase GCN5, and the DUB module comprises the histone H2B deubiquitinase UBP8. Also identified in an altered form of SAGA, named SALSA (SAGA altered, Spt8 absent) or SLIK (SAGA-like) complex, which contains a C-terminal truncated form of SPT7 and is missing SPT8. However, it has been shown that the SAGA and SAGA-like SALSA/SLIK transcriptional coactivators are structurally and biochemically equivalent.

It localises to the nucleus. The enzyme catalyses Thiol-dependent hydrolysis of ester, thioester, amide, peptide and isopeptide bonds formed by the C-terminal Gly of ubiquitin (a 76-residue protein attached to proteins as an intracellular targeting signal).. Functionally, histone deubiquitinating enzyme component of the transcription coactivator SAGA complex. SAGA acts as a general cofactor required for essentially all RNA polymerase II transcription. At the promoters, SAGA is required for transcription pre-initiation complex (PIC) recruitment. It influences RNA polymerase II transcriptional activity through different activities such as TBP interaction (via core/TAF module) and promoter selectivity, interaction with transcription activators (via Tra1/SPT module), and chromatin modification through histone acetylation (via HAT module) and deubiquitination (via DUB module). SAGA preferentially acetylates histones H3 (to form H3K9ac, H3K14ac, H3K18ac and H3K23ac) and H2B and deubiquitinates histone H2B. SAGA interacts with DNA via upstream activating sequences (UASs). Also identified in a modified version of SAGA named SALSA or SLIK. The cleavage of SPT7 and the absence of the SPT8 subunit in SLIK neither drive any major conformational differences in its structure compared with SAGA, nor significantly affect HAT, DUB, or DNA-binding activities. Within the DUB module, the correctly positioned zinc finger domains of SGF11 and SGF73 are both required to fully activate the ubiquitin hydrolase UBP8. The DUB module is also linked to the splicing efficiency of many transcripts. The sequence is that of Ubiquitin carboxyl-terminal hydrolase 8 (UBP8) from Saccharomyces cerevisiae (strain ATCC 204508 / S288c) (Baker's yeast).